The chain runs to 117 residues: Non-specific lipid-transfer protein (117 aa).

The signal sequence occupies residues 1-26 (MASSAVIKLACAVLLCIVVAAPYAEA). 4 disulfide bridges follow: cysteine 30/cysteine 76, cysteine 40/cysteine 53, cysteine 54/cysteine 99, and cysteine 74/cysteine 113.

The protein belongs to the plant LTP family.

Plant non-specific lipid-transfer proteins transfer phospholipids as well as galactolipids across membranes. May play a role in wax or cutin deposition in the cell walls of expanding epidermal cells and certain secretory tissues. The sequence is that of Non-specific lipid-transfer protein from Spinacia oleracea (Spinach).